The chain runs to 1406 residues: MSEPKTASERYQKISQLEHILKRPDTYIGSVEIQEQEQWIYDEETDCMIDKTVNIVPGLFKIFDEILVNAADNKVRDPSMKRIDVTINPEENFIEVRNDGKGIPIEIHEKEKIYIPELIFGHLLTSSNYDDDEKKVTGGRNGYGAKLCNIFSTEFTLETADPKNGRKYVQTWENNMNVCHPPKITSYKKGPSYTKVAFKPDLSRFGMESLDSDILGVMRRRVYDINGSVRDVNVYLNGKPLKIRNFKNYVELYLKSLEKMRKMDNGESDTTPSNIPTILYERVSDRWEIAFAVSDISFKQVSFVNSIATTTGGTHVNYIADQIVRKVSDILKKKKKNIKPYQIKNNMFIFINCLIENPAFTSQTKEQLTTRVKDFGSRCDISSDYINKIMKTDLATKIFEIADENANNALKKSDGSRKSRITDYPKLEDANKAGTKDGYKCTLILTEGDSALSLAVAGLAVVGRDYYGCYPLRGKMLNVREATADQILKNAEIQAIKKIMGLQHRKKYEDTKSLRYGHLMIMTDQDHDGSHIKGLIINFIETSFPGLLDIPGFLIEFITPIVKVTITKPIKKVISFFNLPDYEKWREEESHKYSWKQKYYKGLGTSTSPEIIEYFSNLDTHLKKFHALQGDDKDLIDLAFSKKKADDRKEWLRQYEPGTVLDPTLNEIPISDFINKELILFSLADNVRSIPSVLDGFKPGQRKVLYTCFKKNLTTEKKVANLAPAVSDYTAYHHGEQALVQTIIGMAQNFVGTNNIYFLKPNGAFGTRATGGKDAAAARYIYTELNKIARKVFHPADDPLFRYVQEDEKTVEPEWYLPVVPMVLINGAEGIGTGWSTSIPPFNPLDVVNNIRHLLNDEEMDDMHPWFRGWTGTMEKIESQRYRMYGRIEQVGPNTLEITELPARTWTSTIKEHLLLGLGGSEKVKPWIKDMEEQHAETIKFIIKLTDEEMTKTRKLGFYERFKLISPISLQNMVAFDYRGKIKKYDHVHEILKDFYEVRLEYYQKRKDYMTGRLQWEAEKLSFQVKFIKMIIDKSLIVTNKPKKQLISELEELGFPRINKEGKPHFGKIDEEVEAIISEDEDEDLEESEEATRKKDKDDESTVNGPEELFGTYEYLLGLKIWSLTKERYEKLLKQKQEKETELENLLKLSAKDLWNNDLDDFLTAYEDFQKMDLFLRNSAVPKTKGGKRKRKGGDDDDYDPSGKKKPARRIKKIKKEDDFDRILIKPQAKIKAKRPVKVKVEPPSSAASTPSVKEELGVSDVTSNASTPSTTIFDQKVKQENSDESGISAFSSKFNKIASAFDEDAPLDQITSEDTSVKESSAPAAKKKAPPKRKAKVVESSEDELSDANLSEQDDEEVVPVRRQRSSRQTAKKSYAEPIEISDEEDFIDDDEDEEVDSDESFNDE.

Residues Asn69, Asn98, 126–128, and 139–146 each bind ATP; these read SSN and GRNGYGAK. Residues 332 to 334 are interaction with DNA; the sequence is KKK. Position 363–365 (363–365) interacts with ATP; that stretch reads QTK. The region spanning 441–555 is the Toprim domain; it reads CTLILTEGDS…GLLDIPGFLI (115 aa). The Mg(2+) site is built by Glu447, Asp524, and Asp526. Residues 690-1159 enclose the Topo IIA-type catalytic domain; it reads IPSVLDGFKP…SAKDLWNNDL (470 aa). The O-(5'-phospho-DNA)-tyrosine intermediate role is filled by Tyr780. An interaction with DNA region spans residues 963–972; that stretch reads KLISPISLQN. The segment covering 1079 to 1089 has biased composition (acidic residues); it reads EDEDEDLEESE. 4 disordered regions span residues 1079-1106, 1183-1215, 1230-1287, and 1303-1406; these read EDED…VNGP, KTKG…KKIK, KIKA…DESG, and DEDA…FNDE. Positions 1090-1100 are enriched in basic and acidic residues; that stretch reads EATRKKDKDDE. The segment covering 1204–1214 has biased composition (basic residues); that stretch reads KKKPARRIKKI. Residues 1261–1274 are compositionally biased toward polar residues; it reads DVTSNASTPSTTIF. Residues 1326–1336 are compositionally biased toward basic residues; it reads AKKKAPPKRKA. Acidic residues-rich tracts occupy residues 1341–1359 and 1381–1406; these read SSED…DEEV and EISD…FNDE.

This sequence belongs to the type II topoisomerase family. In terms of assembly, homodimer. It depends on Mg(2+) as a cofactor. The cofactor is Mn(2+). Ca(2+) is required as a cofactor.

Its subcellular location is the nucleus. The catalysed reaction is ATP-dependent breakage, passage and rejoining of double-stranded DNA.. Control of topological states of DNA by transient breakage and subsequent rejoining of DNA strands. Topoisomerase II makes double-strand breaks. The sequence is that of DNA topoisomerase 2 (TOP2) from Candida glabrata (strain ATCC 2001 / BCRC 20586 / JCM 3761 / NBRC 0622 / NRRL Y-65 / CBS 138) (Yeast).